The following is a 385-amino-acid chain: Putative nickel insertion protein (385 aa).

It belongs to the LarC family.

This chain is Putative nickel insertion protein, found in Citrifermentans bemidjiense (strain ATCC BAA-1014 / DSM 16622 / JCM 12645 / Bem) (Geobacter bemidjiensis).